The sequence spans 310 residues: tRNA uridine(34) hydroxylase (310 aa).

The Rhodanese domain maps to 124–218 (SDPEVLLIDT…YFEEVPQEES (95 aa)). The active-site Cysteine persulfide intermediate is the Cys-178.

Belongs to the TrhO family.

It catalyses the reaction uridine(34) in tRNA + AH2 + O2 = 5-hydroxyuridine(34) in tRNA + A + H2O. Catalyzes oxygen-dependent 5-hydroxyuridine (ho5U) modification at position 34 in tRNAs. This Pseudomonas putida (strain ATCC 700007 / DSM 6899 / JCM 31910 / BCRC 17059 / LMG 24140 / F1) protein is tRNA uridine(34) hydroxylase.